We begin with the raw amino-acid sequence, 400 residues long: Subtilisin-like protease 11 (400 aa).

The signal sequence occupies residues 1–19 (MGLFKVIFTAVAALSAVDA). Positions 20-117 (AELLSSAKSK…VEHDRHVYIS (98 aa)) are excised as a propeptide. The region spanning 35–116 (SYLVVMKDSV…FVEHDRHVYI (82 aa)) is the Inhibitor I9 domain. The region spanning 127–400 (SWGLGRVSHR…NKLLYNGSGK (274 aa)) is the Peptidase S8 domain. N-linked (GlcNAc...) asparagine glycosylation is present at asparagine 138. The active-site Charge relay system is aspartate 159. The N-linked (GlcNAc...) asparagine glycan is linked to asparagine 181. Histidine 191 (charge relay system) is an active-site residue. N-linked (GlcNAc...) asparagine glycans are attached at residues asparagine 252 and asparagine 337. Serine 346 serves as the catalytic Charge relay system. Residues asparagine 388 and asparagine 396 are each glycosylated (N-linked (GlcNAc...) asparagine).

This sequence belongs to the peptidase S8 family.

The protein localises to the secreted. Its function is as follows. Secreted subtilisin-like serine protease with keratinolytic activity that contributes to pathogenicity. The sequence is that of Subtilisin-like protease 11 (SUB11) from Arthroderma benhamiae (strain ATCC MYA-4681 / CBS 112371) (Trichophyton mentagrophytes).